The primary structure comprises 274 residues: Large ribosomal subunit protein uL2 (274 aa).

The tract at residues 224–274 (VAMNPVDHPHGGGEGRTSGGRHPVTPWGIPTKGYKTRKNKRSNKLIVQKRK) is disordered. A compositionally biased stretch (basic residues) spans 257–274 (YKTRKNKRSNKLIVQKRK).

It belongs to the universal ribosomal protein uL2 family. Part of the 50S ribosomal subunit. Forms a bridge to the 30S subunit in the 70S ribosome.

In terms of biological role, one of the primary rRNA binding proteins. Required for association of the 30S and 50S subunits to form the 70S ribosome, for tRNA binding and peptide bond formation. It has been suggested to have peptidyltransferase activity; this is somewhat controversial. Makes several contacts with the 16S rRNA in the 70S ribosome. This chain is Large ribosomal subunit protein uL2, found in Francisella philomiragia subsp. philomiragia (strain ATCC 25017 / CCUG 19701 / FSC 153 / O#319-036).